Here is a 411-residue protein sequence, read N- to C-terminus: NADH-quinone oxidoreductase subunit H (411 aa).

Helical transmembrane passes span 18-38 (LAKS…AILI), 84-104 (WIYL…FAVI), 124-144 (LPVA…GIVL), 165-185 (VISY…YAGT), 198-218 (TWYI…MVGE), 260-280 (VSAL…PISI), 288-308 (WWPL…FMWL), 321-341 (MALG…IVAI), and 352-372 (APAT…ALLG).

The protein belongs to the complex I subunit 1 family. NDH-1 is composed of 14 different subunits. Subunits NuoA, H, J, K, L, M, N constitute the membrane sector of the complex.

It is found in the cell membrane. The catalysed reaction is a quinone + NADH + 5 H(+)(in) = a quinol + NAD(+) + 4 H(+)(out). In terms of biological role, NDH-1 shuttles electrons from NADH, via FMN and iron-sulfur (Fe-S) centers, to quinones in the respiratory chain. The immediate electron acceptor for the enzyme in this species is believed to be menaquinone. Couples the redox reaction to proton translocation (for every two electrons transferred, four hydrogen ions are translocated across the cytoplasmic membrane), and thus conserves the redox energy in a proton gradient. This subunit may bind ubiquinone. The polypeptide is NADH-quinone oxidoreductase subunit H (Mycolicibacterium vanbaalenii (strain DSM 7251 / JCM 13017 / BCRC 16820 / KCTC 9966 / NRRL B-24157 / PYR-1) (Mycobacterium vanbaalenii)).